The primary structure comprises 172 residues: uncharacterized protein (172 aa).

The PfpI endopeptidase domain maps to 3 to 171 (KKVAIILADE…FNREIVKKLE (169 aa)).

Belongs to the peptidase C56 family.

This is an uncharacterized protein from Staphylococcus epidermidis (strain ATCC 35984 / DSM 28319 / BCRC 17069 / CCUG 31568 / BM 3577 / RP62A).